A 463-amino-acid chain; its full sequence is Chromosomal replication initiator protein DnaA (463 aa).

The tract at residues 1 to 83 (MSTNQIILTD…LQLFQHYNNT (83 aa)) is domain I, interacts with DnaA modulators. Positions 83–124 (TIKSIEIITKELPGITQTVIALPTKTFADIGSSELNAENIFS) are domain II. The domain III, AAA+ region stretch occupies residues 125 to 343 (TLDVRFTFDN…GALNKVIAHS (219 aa)). ATP-binding residues include Gly171, Gly173, Lys174, and Thr175. A domain IV, binds dsDNA region spans residues 344 to 463 (NFTLKEITLE…INLLMKILQN (120 aa)).

It belongs to the DnaA family. In terms of assembly, oligomerizes as a right-handed, spiral filament on DNA at oriC.

It localises to the cytoplasm. In terms of biological role, plays an essential role in the initiation and regulation of chromosomal replication. ATP-DnaA binds to the origin of replication (oriC) to initiate formation of the DNA replication initiation complex once per cell cycle. Binds the DnaA box (a 9 base pair repeat at the origin) and separates the double-stranded (ds)DNA. Forms a right-handed helical filament on oriC DNA; dsDNA binds to the exterior of the filament while single-stranded (ss)DNA is stabiized in the filament's interior. The ATP-DnaA-oriC complex binds and stabilizes one strand of the AT-rich DNA unwinding element (DUE), permitting loading of DNA polymerase. After initiation quickly degrades to an ADP-DnaA complex that is not apt for DNA replication. Binds acidic phospholipids. The sequence is that of Chromosomal replication initiator protein DnaA from Rickettsia massiliae (strain Mtu5).